A 142-amino-acid chain; its full sequence is Peptide methionine sulfoxide reductase MsrB (142 aa).

Residues 13 to 135 enclose the MsrB domain; the sequence is EKDWKVELSE…NSLSMTFKGE (123 aa). Zn(2+)-binding residues include Cys-52, Cys-55, Cys-101, and Cys-104. Cys-124 (nucleophile) is an active-site residue.

The protein belongs to the MsrB Met sulfoxide reductase family. Zn(2+) serves as cofactor.

The catalysed reaction is L-methionyl-[protein] + [thioredoxin]-disulfide + H2O = L-methionyl-(R)-S-oxide-[protein] + [thioredoxin]-dithiol. The sequence is that of Peptide methionine sulfoxide reductase MsrB from Alteromonas mediterranea (strain DSM 17117 / CIP 110805 / LMG 28347 / Deep ecotype).